Consider the following 557-residue polypeptide: Dihydroxy-acid dehydratase (557 aa).

Residue Asp78 participates in Mg(2+) binding. Position 119 (Cys119) interacts with [2Fe-2S] cluster. Residues Asp120 and Lys121 each coordinate Mg(2+). Lys121 carries the post-translational modification N6-carboxylysine. Position 192 (Cys192) interacts with [2Fe-2S] cluster. Glu443 contacts Mg(2+). The active-site Proton acceptor is the Ser469.

Belongs to the IlvD/Edd family. Homodimer. It depends on [2Fe-2S] cluster as a cofactor. The cofactor is Mg(2+).

It catalyses the reaction (2R)-2,3-dihydroxy-3-methylbutanoate = 3-methyl-2-oxobutanoate + H2O. The catalysed reaction is (2R,3R)-2,3-dihydroxy-3-methylpentanoate = (S)-3-methyl-2-oxopentanoate + H2O. It functions in the pathway amino-acid biosynthesis; L-isoleucine biosynthesis; L-isoleucine from 2-oxobutanoate: step 3/4. Its pathway is amino-acid biosynthesis; L-valine biosynthesis; L-valine from pyruvate: step 3/4. Functions in the biosynthesis of branched-chain amino acids. Catalyzes the dehydration of (2R,3R)-2,3-dihydroxy-3-methylpentanoate (2,3-dihydroxy-3-methylvalerate) into 2-oxo-3-methylpentanoate (2-oxo-3-methylvalerate) and of (2R)-2,3-dihydroxy-3-methylbutanoate (2,3-dihydroxyisovalerate) into 2-oxo-3-methylbutanoate (2-oxoisovalerate), the penultimate precursor to L-isoleucine and L-valine, respectively. The polypeptide is Dihydroxy-acid dehydratase (Persephonella marina (strain DSM 14350 / EX-H1)).